A 671-amino-acid chain; its full sequence is DNA ligase (671 aa).

Residues D32–D36, S81–L82, and E113 contribute to the NAD(+) site. K115 (N6-AMP-lysine intermediate) is an active-site residue. R136, E173, K290, and K314 together coordinate NAD(+). Residues C408, C411, C426, and C432 each contribute to the Zn(2+) site. In terms of domain architecture, BRCT spans E593–A671.

Belongs to the NAD-dependent DNA ligase family. LigA subfamily. Mg(2+) serves as cofactor. Requires Mn(2+) as cofactor.

The catalysed reaction is NAD(+) + (deoxyribonucleotide)n-3'-hydroxyl + 5'-phospho-(deoxyribonucleotide)m = (deoxyribonucleotide)n+m + AMP + beta-nicotinamide D-nucleotide.. DNA ligase that catalyzes the formation of phosphodiester linkages between 5'-phosphoryl and 3'-hydroxyl groups in double-stranded DNA using NAD as a coenzyme and as the energy source for the reaction. It is essential for DNA replication and repair of damaged DNA. The protein is DNA ligase of Salmonella paratyphi B (strain ATCC BAA-1250 / SPB7).